Reading from the N-terminus, the 283-residue chain is ATP phosphoribosyltransferase (283 aa).

Belongs to the ATP phosphoribosyltransferase family. Long subfamily. In terms of assembly, equilibrium between an active dimeric form, an inactive hexameric form and higher aggregates. Interconversion between the various forms is largely reversible and is influenced by the natural substrates and inhibitors of the enzyme. Mg(2+) serves as cofactor.

It is found in the cytoplasm. The enzyme catalyses 1-(5-phospho-beta-D-ribosyl)-ATP + diphosphate = 5-phospho-alpha-D-ribose 1-diphosphate + ATP. Its pathway is amino-acid biosynthesis; L-histidine biosynthesis; L-histidine from 5-phospho-alpha-D-ribose 1-diphosphate: step 1/9. With respect to regulation, feedback inhibited by histidine. Catalyzes the condensation of ATP and 5-phosphoribose 1-diphosphate to form N'-(5'-phosphoribosyl)-ATP (PR-ATP). Has a crucial role in the pathway because the rate of histidine biosynthesis seems to be controlled primarily by regulation of HisG enzymatic activity. The sequence is that of ATP phosphoribosyltransferase from Mycobacterium sp. (strain JLS).